The primary structure comprises 1502 residues: Rho GTPase-activating protein 5 (1502 aa).

FF domains follow at residues 267-325 (QLVV…HIEQ), 366-420 (KLME…HVQH), 427-481 (RVEM…HQRE), and 482-548 (IVEK…HIGF). Tyr550 is subject to 3'-nitrotyrosine. 2 positions are modified to phosphoserine: Ser590 and Ser765. One can recognise a pG1 pseudoGTPase domain in the interval 590-763 (STNIDKVNLF…LESVKHNLDV (174 aa)). A pG2 pseudoGTPase domain is found at 779-944 (RIVMCAMCGD…FSDVLEKKNM (166 aa)). Residues Ser951 and Ser968 each carry the phosphoserine modification. Disordered regions lie at residues 975–1004 (YNNYPDSDDDTEAPPPYSPIGDDVQLLPTP), 1022–1050 (HSTPNCHDHERNHKVPPPIKPKPVVPKTN), and 1069–1089 (NPRKQTSRVPLAHPEDMDPSD). A compositionally biased stretch (pro residues) spans 1036–1045 (VPPPIKPKPV). Ser1115 bears the Phosphoserine mark. Disordered stretches follow at residues 1125-1156 (FVNNTQGDEENGFSDRTSKSHGERRPSKYKYK) and 1168-1254 (YRRT…TRRN). Positions 1140–1150 (RTSKSHGERRP) are enriched in basic and acidic residues. Residues Ser1173, Ser1176, Ser1195, Ser1202, and Ser1218 each carry the phosphoserine modification. In terms of domain architecture, Rho-GAP spans 1262–1449 (MPLQDLVTAE…TFIQQCQFFF (188 aa)).

In terms of assembly, may interact with RASA1/p120GAP. As to expression, detected in skin fibroblasts (at protein level).

It is found in the cytoplasm. The protein localises to the cell membrane. GTPase-activating protein for Rho family members. The polypeptide is Rho GTPase-activating protein 5 (ARHGAP5) (Homo sapiens (Human)).